The following is a 230-amino-acid chain: Orotidine 5'-phosphate decarboxylase (230 aa).

Substrate-binding positions include aspartate 9, lysine 31, 58–67 (DLKFFDIPNT), threonine 120, arginine 180, glutamine 188, glycine 208, and arginine 209. Catalysis depends on lysine 60, which acts as the Proton donor.

The protein belongs to the OMP decarboxylase family. Type 1 subfamily. As to quaternary structure, homodimer.

It carries out the reaction orotidine 5'-phosphate + H(+) = UMP + CO2. It participates in pyrimidine metabolism; UMP biosynthesis via de novo pathway; UMP from orotate: step 2/2. Catalyzes the decarboxylation of orotidine 5'-monophosphate (OMP) to uridine 5'-monophosphate (UMP). This is Orotidine 5'-phosphate decarboxylase from Maridesulfovibrio salexigens (strain ATCC 14822 / DSM 2638 / NCIMB 8403 / VKM B-1763) (Desulfovibrio salexigens).